A 164-amino-acid polypeptide reads, in one-letter code: DNA-directed RNA polymerase 19 kDa subunit (164 aa).

Positions 1 to 35 are enriched in acidic residues; that stretch reads MADTDDIIDYESDDLTEYEDDEEEEEDGESLETSD. Positions 1 to 39 are disordered; that stretch reads MADTDDIIDYESDDLTEYEDDEEEEEDGESLETSDIDPK.

It belongs to the poxviridae DNA-directed RNA polymerase 19 kDa subunit family. In terms of assembly, the DNA-dependent RNA polymerase used for intermediate and late genes expression consists of eight subunits Rpo30/OPG66, Rpo7/OPG90, Rpo22/OPG103, Rpo147/OPG105, Rpo18/OPG119, Rpo19/OPG131, Rpo132/OPG151 and Rpo35/OPG156. The same holoenzyme, with the addition of the transcription-specificity factor OPG109, is used for early gene expression.

It localises to the virion. The enzyme catalyses RNA(n) + a ribonucleoside 5'-triphosphate = RNA(n+1) + diphosphate. Part of the DNA-dependent RNA polymerase which catalyzes the transcription of viral DNA into RNA using the four ribonucleoside triphosphates as substrates. Responsible for the transcription of early, intermediate and late genes. DNA-dependent RNA polymerase associates with the early transcription factor (ETF), itself composed of OPG118 and OPG133, thereby allowing the early genes transcription. Late transcription, and probably also intermediate transcription, require newly synthesized RNA polymerase. This chain is DNA-directed RNA polymerase 19 kDa subunit (OPG131), found in Homo sapiens (Human).